The primary structure comprises 104 residues: Phosphoribosyl-ATP pyrophosphatase (104 aa).

This sequence belongs to the PRA-PH family.

The protein localises to the cytoplasm. The enzyme catalyses 1-(5-phospho-beta-D-ribosyl)-ATP + H2O = 1-(5-phospho-beta-D-ribosyl)-5'-AMP + diphosphate + H(+). The protein operates within amino-acid biosynthesis; L-histidine biosynthesis; L-histidine from 5-phospho-alpha-D-ribose 1-diphosphate: step 2/9. The sequence is that of Phosphoribosyl-ATP pyrophosphatase from Rhizobium rhizogenes (strain K84 / ATCC BAA-868) (Agrobacterium radiobacter).